The following is a 607-amino-acid chain: V-type proton ATPase catalytic subunit A (607 aa).

251–258 is an ATP binding site; sequence GAFGCGKT.

The protein belongs to the ATPase alpha/beta chains family. As to quaternary structure, V-ATPase is a heteromultimeric enzyme composed of a peripheral catalytic V1 complex (components A to H) attached to an integral membrane V0 proton pore complex (components: a, c, c', c'', d, e, f and VOA1).

Its subcellular location is the vacuole membrane. It carries out the reaction ATP + H2O + 4 H(+)(in) = ADP + phosphate + 5 H(+)(out). Its function is as follows. Catalytic subunit of the V1 complex of vacuolar(H+)-ATPase (V-ATPase), a multisubunit enzyme composed of a peripheral complex (V1) that hydrolyzes ATP and a membrane integral complex (V0) that translocates protons. V-ATPase is responsible for acidifying and maintaining the pH of intracellular compartments. The protein is V-type proton ATPase catalytic subunit A (VMA1) of Encephalitozoon cuniculi (strain GB-M1) (Microsporidian parasite).